Here is a 305-residue protein sequence, read N- to C-terminus: Putative lipid kinase SAB0675c (305 aa).

A DAGKc domain is found at 3–139 (NKYTHGVLFY…YDVIKINNQY (137 aa)). ATP-binding positions include serine 44, 74-80 (GDGTVNE), and threonine 101. Mg(2+) contacts are provided by serine 220, aspartate 223, and glutamate 225. Catalysis depends on glutamate 281, which acts as the Proton acceptor.

Belongs to the diacylglycerol/lipid kinase family. Requires Mg(2+) as cofactor.

Functionally, may catalyze the ATP-dependent phosphorylation of lipids other than diacylglycerol (DAG). This is Putative lipid kinase SAB0675c from Staphylococcus aureus (strain bovine RF122 / ET3-1).